A 237-amino-acid polypeptide reads, in one-letter code: MRPSNRTPAQSRPVTITRQFTAHAEGSVLVEFGDTKVLCTASFEEGVPRFLKGQGQGWVTAEYGMLPRSTHSRMNREAARGKQSGRTQEIQRLIGRSLRAAVDMKLLGENTIVIDCDVIQADGGTRTAAITGACVALVDALNWARGKGILKTNPLKFLIAAVSVGIYKGEPICDLEYIEDSAAETDMNVVMTETGKMIEIQGTAEGEPFTHEELLSLLDLAKHGIREIVDIQKASLS.

Phosphate-binding positions include Arg-86 and 124-126 (GTR).

Belongs to the RNase PH family. Homohexameric ring arranged as a trimer of dimers.

It carries out the reaction tRNA(n+1) + phosphate = tRNA(n) + a ribonucleoside 5'-diphosphate. Functionally, phosphorolytic 3'-5' exoribonuclease that plays an important role in tRNA 3'-end maturation. Removes nucleotide residues following the 3'-CCA terminus of tRNAs; can also add nucleotides to the ends of RNA molecules by using nucleoside diphosphates as substrates, but this may not be physiologically important. Probably plays a role in initiation of 16S rRNA degradation (leading to ribosome degradation) during starvation. This is Ribonuclease PH from Shewanella piezotolerans (strain WP3 / JCM 13877).